A 463-amino-acid polypeptide reads, in one-letter code: A-type ATP synthase subunit B (463 aa).

It belongs to the ATPase alpha/beta chains family. Has multiple subunits with at least A(3), B(3), C, D, E, F, H, I and proteolipid K(x).

It localises to the cell membrane. Functionally, component of the A-type ATP synthase that produces ATP from ADP in the presence of a proton gradient across the membrane. The B chain is a regulatory subunit. The sequence is that of A-type ATP synthase subunit B from Desulfurococcus sp. (strain SY).